The primary structure comprises 434 residues: Glutamate-1-semialdehyde 2,1-aminomutase 1 (434 aa).

The residue at position 270 (Lys-270) is an N6-(pyridoxal phosphate)lysine.

This sequence belongs to the class-III pyridoxal-phosphate-dependent aminotransferase family. HemL subfamily. In terms of assembly, homodimer. It depends on pyridoxal 5'-phosphate as a cofactor.

Its subcellular location is the cytoplasm. It catalyses the reaction (S)-4-amino-5-oxopentanoate = 5-aminolevulinate. It participates in porphyrin-containing compound metabolism; protoporphyrin-IX biosynthesis; 5-aminolevulinate from L-glutamyl-tRNA(Glu): step 2/2. The chain is Glutamate-1-semialdehyde 2,1-aminomutase 1 from Bacillus anthracis (strain A0248).